Here is a 121-residue protein sequence, read N- to C-terminus: UPF0212 protein VNG_0879C (121 aa).

It belongs to the UPF0212 family.

This is UPF0212 protein VNG_0879C from Halobacterium salinarum (strain ATCC 700922 / JCM 11081 / NRC-1) (Halobacterium halobium).